Consider the following 92-residue polypeptide: Small ribosomal subunit protein uS19c (92 aa).

It belongs to the universal ribosomal protein uS19 family.

It is found in the plastid. It localises to the chloroplast. In terms of biological role, protein S19 forms a complex with S13 that binds strongly to the 16S ribosomal RNA. This is Small ribosomal subunit protein uS19c (rps19) from Porphyra purpurea (Red seaweed).